A 114-amino-acid polypeptide reads, in one-letter code: Fluoride-specific ion channel FluC 1 (114 aa).

The next 3 helical transmembrane spans lie at 28–48 (VFPW…GFLH), 56–76 (ILLL…TFQV), and 91–111 (IIYL…GSWL). Residues Gly66 and Thr69 each coordinate Na(+).

Belongs to the fluoride channel Fluc/FEX (TC 1.A.43) family.

The protein resides in the cell membrane. It carries out the reaction fluoride(in) = fluoride(out). Na(+) is not transported, but it plays an essential structural role and its presence is essential for fluoride channel function. Functionally, fluoride-specific ion channel. Important for reducing fluoride concentration in the cell, thus reducing its toxicity. The protein is Fluoride-specific ion channel FluC 1 of Ligilactobacillus salivarius (strain UCC118) (Lactobacillus salivarius).